We begin with the raw amino-acid sequence, 754 residues long: Subtilisin-like protease SBT3.12 (754 aa).

The N-terminal stretch at 1–28 (MGIVKGRSRAGLFIGFLFIVNVGFCVFA) is a signal peptide. A propeptide spans 29–117 (QESSNEERKI…VAPNRKVELQ (89 aa)) (activation peptide). The region spanning 39–116 (YVVHLGVRRH…SVAPNRKVEL (78 aa)) is the Inhibitor I9 domain. Residues 121-606 (IYDYLGLSPS…AGLVNAERAK (486 aa)) enclose the Peptidase S8 domain. Asp151 (charge relay system) is an active-site residue. Asn206 carries an N-linked (GlcNAc...) asparagine glycan. The active-site Charge relay system is the His224. Residues Asn239 and Asn369 are each glycosylated (N-linked (GlcNAc...) asparagine). Residue Ser537 is the Charge relay system of the active site. N-linked (GlcNAc...) asparagine glycans are attached at residues Asn629 and Asn740.

This sequence belongs to the peptidase S8 family.

It is found in the secreted. The chain is Subtilisin-like protease SBT3.12 from Arabidopsis thaliana (Mouse-ear cress).